We begin with the raw amino-acid sequence, 465 residues long: Ribulose bisphosphate carboxylase large chain (465 aa).

Lys-4 is subject to N6,N6,N6-trimethyllysine. The substrate site is built by Asn-113 and Thr-163. Lys-165 acts as the Proton acceptor in catalysis. Lys-167 contacts substrate. Lys-191, Asp-193, and Glu-194 together coordinate Mg(2+). Residue Lys-191 is modified to N6-carboxylysine. His-284 (proton acceptor) is an active-site residue. 3 residues coordinate substrate: Arg-285, His-317, and Ser-369.

This sequence belongs to the RuBisCO large chain family. Type I subfamily. In terms of assembly, heterohexadecamer of 8 large chains and 8 small chains. Mg(2+) serves as cofactor.

It is found in the plastid. It localises to the chloroplast. The enzyme catalyses 2 (2R)-3-phosphoglycerate + 2 H(+) = D-ribulose 1,5-bisphosphate + CO2 + H2O. The catalysed reaction is D-ribulose 1,5-bisphosphate + O2 = 2-phosphoglycolate + (2R)-3-phosphoglycerate + 2 H(+). Its function is as follows. RuBisCO catalyzes two reactions: the carboxylation of D-ribulose 1,5-bisphosphate, the primary event in carbon dioxide fixation, as well as the oxidative fragmentation of the pentose substrate in the photorespiration process. Both reactions occur simultaneously and in competition at the same active site. This Sarracenia flava (Yellow pitcher plant) protein is Ribulose bisphosphate carboxylase large chain.